Here is a 74-residue protein sequence, read N- to C-terminus: UPF0435 protein ABC2298 (74 aa).

This sequence belongs to the UPF0435 family.

The chain is UPF0435 protein ABC2298 from Shouchella clausii (strain KSM-K16) (Alkalihalobacillus clausii).